Reading from the N-terminus, the 41-residue chain is MKIRCFCIVLIVSGALLTEVNNNRSLSGDNLLVVNNLQSSK.

A membrane pass occupies residues 1–17 (MKIRCFCIVLIVSGALL).

The protein belongs to the TimP toxin family.

It is found in the cell inner membrane. Functionally, putative toxic component of a potential type I toxin-antitoxin (TA) system. Neutralized by sRNA antitoxin TimR which binds to the 5' UTR of timP mRNA and inhibits translation. The antitoxin gene is encoded immediately upstream and transcribed divergently from the toxin gene; antitoxin RNA is less stable than timP mRNA. This Escherichia coli (strain K12) protein is Putative toxic protein TimP.